We begin with the raw amino-acid sequence, 705 residues long: Translation initiation factor IF-2 (705 aa).

Residues 40–124 (DDQIKALDKK…QPAAPKEIPS (85 aa)) are disordered. The span at 41–58 (DQIKALDKKFKKEQKNDN) shows a compositional bias: basic and acidic residues. The segment covering 59 to 77 (KQSTQNNHQKSNNQNQNKG) has biased composition (low complexity). The segment covering 94–108 (KGNKKNNRNNKKNNK) has biased composition (basic residues). In terms of domain architecture, tr-type G spans 207–376 (ERPAVVTIMG…GLVAEVQELK (170 aa)). The G1 stretch occupies residues 216–223 (GHVDHGKT). Position 216–223 (216–223 (GHVDHGKT)) interacts with GTP. The tract at residues 241–245 (GITQH) is G2. The G3 stretch occupies residues 262–265 (DTPG). GTP is bound by residues 262–266 (DTPGH) and 316–319 (NKID). The segment at 316 to 319 (NKID) is G4. Residues 352 to 354 (SAL) form a G5 region.

The protein belongs to the TRAFAC class translation factor GTPase superfamily. Classic translation factor GTPase family. IF-2 subfamily.

It localises to the cytoplasm. In terms of biological role, one of the essential components for the initiation of protein synthesis. Protects formylmethionyl-tRNA from spontaneous hydrolysis and promotes its binding to the 30S ribosomal subunits. Also involved in the hydrolysis of GTP during the formation of the 70S ribosomal complex. This Staphylococcus aureus (strain USA300) protein is Translation initiation factor IF-2.